A 309-amino-acid polypeptide reads, in one-letter code: MFSPADNIFIILITGEFILGILGNGYIALVNWIDWIKKKKISTIDYILTNLVISRICLISVMVVNGIVIAVYPDVYTKSKLQIAICTFWTFANYLNMWITTCLNVFYFLKIANSSHPLFLWLKQKIDMVVRWILLGCFAISLLVSLIAAIVLSYDYRFHAIAKHKRNITEMFHVSKRPYFEPLTLFNLFAIVPFIVSLISFFLLVRSLWRHTKQIKLYATGGRDPSTEVHVRAIKTMTSFIFLFFLYYISSILVTFSYLMTKYKLAVEFGEIVAILYPLGHSLILIVLNNKLRQTFVRMLTCRKIACVI.

The Extracellular segment spans residues M1–N7. A helical membrane pass occupies residues I8–A28. At L29 to N50 the chain is on the cytoplasmic side. The chain crosses the membrane as a helical span at residues L51–V71. The Extracellular portion of the chain corresponds to Y72 to Q82. A helical transmembrane segment spans residues I83–L103. The Cytoplasmic segment spans residues N104–R131. A helical membrane pass occupies residues W132–L152. Residues S153 to T184 are Extracellular-facing. The N-linked (GlcNAc...) asparagine glycan is linked to N167. A helical membrane pass occupies residues L185–V205. Topologically, residues R206–S239 are cytoplasmic. A helical transmembrane segment spans residues F240–M260. Residues T261 to A266 lie on the Extracellular side of the membrane. Residues V267 to V287 traverse the membrane as a helical segment. Residues L288 to I309 are Cytoplasmic-facing.

The protein belongs to the G-protein coupled receptor T2R family.

Its subcellular location is the membrane. Receptor that may play a role in the perception of bitterness and is gustducin-linked. May play a role in sensing the chemical composition of the gastrointestinal content. The activity of this receptor may stimulate alpha gustducin, mediate PLC-beta-2 activation and lead to the gating of TRPM5. This Gorilla gorilla gorilla (Western lowland gorilla) protein is Taste receptor type 2 member 8 (TAS2R8).